The sequence spans 260 residues: Proteasome assembly chaperone 2 (260 aa).

Belongs to the PSMG2 family. Forms a heterodimer with psmg1. Post-translationally, degraded by the proteasome upon completion of 20S proteasome maturation.

It localises to the nucleus. In terms of biological role, chaperone protein which promotes assembly of the 20S proteasome as part of a heterodimer with psmg1. The chain is Proteasome assembly chaperone 2 from Danio rerio (Zebrafish).